Reading from the N-terminus, the 1392-residue chain is DNA-directed RNA polymerase subunit beta (1392 aa).

The protein belongs to the RNA polymerase beta chain family. The RNAP catalytic core consists of 2 alpha, 1 beta, 1 beta' and 1 omega subunit. When a sigma factor is associated with the core the holoenzyme is formed, which can initiate transcription.

It carries out the reaction RNA(n) + a ribonucleoside 5'-triphosphate = RNA(n+1) + diphosphate. DNA-dependent RNA polymerase catalyzes the transcription of DNA into RNA using the four ribonucleoside triphosphates as substrates. This chain is DNA-directed RNA polymerase subunit beta, found in Neisseria meningitidis serogroup A / serotype 4A (strain DSM 15465 / Z2491).